We begin with the raw amino-acid sequence, 210 residues long: Phosphate propanoyltransferase (210 aa).

Position 26 to 28 (26 to 28) interacts with CoA; it reads ISN. The Zn(2+) site is built by histidine 30 and histidine 32. CoA is bound by residues lysine 71 and arginine 78. Arginine 84 contributes to the phosphate binding site. Positions 90, 138, 140, and 186 each coordinate Zn(2+). Position 193 (asparagine 193) interacts with CoA.

It belongs to the PduL family. The cofactor is Zn(2+).

It localises to the bacterial microcompartment. It catalyses the reaction propanoyl-CoA + phosphate = propanoyl phosphate + CoA. It participates in polyol metabolism; 1,2-propanediol degradation. In terms of biological role, involved in 1,2-propanediol (1,2-PD) utilization within the bacterial microcompartment (BMC) dedicated to 1,2-PD degradation by catalyzing the conversion of propanoyl-CoA to propanoyl-phosphate. Required for optimal growth on 1,2-PD. CoA is regenerated within the BMC (for use by PduP) via this enzyme, although there must also be cofactor transport across the BMC. Directly targeted to the BMC. Expression of a cosmid containing the full 21-gene pdu operon in E.coli allows E.coli to grow on 1,2-propanediol (1,2-PD) with the appearance of bacterial microcompartments (BMC) in its cytoplasm. Its function is as follows. The 1,2-PD-specific bacterial microcompartment (BMC) concentrates low levels of 1,2-PD catabolic enzymes, concentrates volatile reaction intermediates thus enhancing pathway flux and keeps the level of toxic, mutagenic propionaldehyde low. In Citrobacter freundii, this protein is Phosphate propanoyltransferase.